Reading from the N-terminus, the 860-residue chain is DNA mismatch repair protein MutS (860 aa).

620-627 (GPNMGGKS) serves as a coordination point for ATP.

This sequence belongs to the DNA mismatch repair MutS family.

In terms of biological role, this protein is involved in the repair of mismatches in DNA. It is possible that it carries out the mismatch recognition step. This protein has a weak ATPase activity. This chain is DNA mismatch repair protein MutS, found in Dechloromonas aromatica (strain RCB).